Here is a 589-residue protein sequence, read N- to C-terminus: Carbonic anhydrase (589 aa).

2 consecutive Alpha-carbonic anhydrase domains span residues 59-316 and 321-585; these read HDYN…YEYK and DKYN…YGYN. 258 to 259 contacts substrate; that stretch reads TT. The segment at 390–589 is catalytic; that stretch reads MQINFGDPPA…TVYGYNGAAA (200 aa). Positions 420, 422, and 440 each coordinate Zn(2+).

Belongs to the alpha-carbonic anhydrase family. Requires Zn(2+) as cofactor.

The enzyme catalyses hydrogencarbonate + H(+) = CO2 + H2O. Reversible hydration of carbon dioxide. The polypeptide is Carbonic anhydrase (DCA) (Dunaliella salina (Green alga)).